The sequence spans 617 residues: MTVTEPATQRGFPLLPSRLSRGSKATRTTDNTAAALLLTFTVVAILWANSPWAHTYSALLDTHVGFSFGSHHAEMTVKHVVNDALMTFFFFIVGLEVTREFTIGELTDRSRAAVPVVAAAAGLILPAVVFLAFNPSGENAHAWGVVISTDTAFLVGALAIIKPKFPARVRLFLLTLAVVDDVGALIAIAVLYSDNIQVAPLVVAVALLGALALVRYLPKARGPAYAVLGAALWIALYLAGIHPTLAGVAVALLIPVFTPERAPVERAVQQIRAFRQSPNSRYARAASRSLRDSISINERLQTAVSPVVSFVILPLFALVNAGVLLDGPSLTAALRSPLTWGIVAGLVVGKFVGIAGATWLIRRTGLGVLAPGLTLRRIAGGAALSGIGFTISLFIVDIAIDDPSRQDQARIGVLAASVLAFALGWAIFRITDWLSPPEPVGLKLLRPIDPERDHVRGRPDAPLTLVEYGDFECPFCSRVTGAIDEVRAHFGDDLLYVWRHFPLERAHPRAFDAARASEAAALQGRFWEMTHELFTHQDDLEWSDMYRYAVAAGCDIEQFDQDVRVHSSKVLHRVSDDAEDADAMDLNATPTLFVNGKRHRGPWDAASLIRALEAGRG.

The tract at residues 1–26 is disordered; it reads MTVTEPATQRGFPLLPSRLSRGSKAT. Residues 1–433 form a na(+)/H(+) antiporter NhaA region; the sequence is MTVTEPATQR…GWAIFRITDW (433 aa). A run of 11 helical transmembrane segments spans residues 33 to 53, 75 to 95, 113 to 133, 141 to 161, 171 to 191, 198 to 218, 234 to 254, 304 to 324, 341 to 361, 378 to 398, and 411 to 431; these read AAAL…SPWA, MTVK…IVGL, AVPV…FLAF, HAWG…LAII, LFLL…IAVL, VAPL…RYLP, IALY…ALLI, VSPV…AGVL, GIVA…TWLI, IAGG…IVDI, and IGVL…FRIT. The Thioredoxin domain maps to 434–617; it reads LSPPEPVGLK…LIRALEAGRG (184 aa).

It in the N-terminal section; belongs to the NhaA Na(+)/H(+) (TC 2.A.33) antiporter family.

The protein localises to the cell membrane. The catalysed reaction is Na(+)(in) + 2 H(+)(out) = Na(+)(out) + 2 H(+)(in). Its function is as follows. Na(+)/H(+) antiporter that extrudes sodium in exchange for external protons. The protein is Na(+)/H(+) antiporter NhaA 1 of Mycolicibacterium gilvum (strain PYR-GCK) (Mycobacterium gilvum (strain PYR-GCK)).